We begin with the raw amino-acid sequence, 544 residues long: Chaperonin GroEL (544 aa).

Residues 30 to 33, Lys-51, 87 to 91, Gly-415, 481 to 483, and Asp-497 each bind ATP; these read TLGP, DGTTT, and DAL.

This sequence belongs to the chaperonin (HSP60) family. Forms a cylinder of 14 subunits composed of two heptameric rings stacked back-to-back. Interacts with the co-chaperonin GroES.

It is found in the cytoplasm. It catalyses the reaction ATP + H2O + a folded polypeptide = ADP + phosphate + an unfolded polypeptide.. Its function is as follows. Together with its co-chaperonin GroES, plays an essential role in assisting protein folding. The GroEL-GroES system forms a nano-cage that allows encapsulation of the non-native substrate proteins and provides a physical environment optimized to promote and accelerate protein folding. The sequence is that of Chaperonin GroEL from Chlamydia muridarum (strain MoPn / Nigg).